The sequence spans 289 residues: Glycine--tRNA ligase alpha subunit (289 aa).

The protein belongs to the class-II aminoacyl-tRNA synthetase family. As to quaternary structure, tetramer of two alpha and two beta subunits.

Its subcellular location is the cytoplasm. The catalysed reaction is tRNA(Gly) + glycine + ATP = glycyl-tRNA(Gly) + AMP + diphosphate. This is Glycine--tRNA ligase alpha subunit (glyQ) from Rickettsia prowazekii (strain Madrid E).